Consider the following 109-residue polypeptide: UPF0122 protein ABC2295 (109 aa).

It belongs to the UPF0122 family.

Functionally, might take part in the signal recognition particle (SRP) pathway. This is inferred from the conservation of its genetic proximity to ftsY/ffh. May be a regulatory protein. This chain is UPF0122 protein ABC2295, found in Shouchella clausii (strain KSM-K16) (Alkalihalobacillus clausii).